The following is a 3459-amino-acid chain: uncharacterized protein (3459 aa).

Residues 158-167 show a composition bias toward acidic residues; the sequence is NDDDWIFNED. Disordered regions lie at residues 158 to 230 and 400 to 447; these read NDDD…NNNN and YGYI…NDEK. Residues 168 to 184 are compositionally biased toward basic and acidic residues; that stretch reads DEKKNKNNDGNDNRYDY. The span at 185-201 shows a compositional bias: low complexity; sequence NDLQNNNNNDNNKYDYN. Residues 204 to 221 are compositionally biased toward basic and acidic residues; the sequence is DDEKKNKNNDGDDNKYDY. Acidic residues predominate over residues 406–443; sequence DNDDGDDYNDDNDNDDNYNDDNYNDDNYNDDNYNDDNY. Residues 771 to 851 are a coiled coil; the sequence is VNEKKKGENE…NEMNKDEENE (81 aa). Residues 1059–1079 form a helical membrane-spanning segment; sequence LIYMIYLFFTYKKYDLLLMFI. Disordered regions lie at residues 1148–1187, 1399–1467, and 1711–1733; these read RRQE…NDYD, IPTQ…NDDD, and QKKK…NKEN. Residues 1404 to 1463 are compositionally biased toward basic and acidic residues; it reads DKNETDEGNKNETDEGDKNETDEGDKNETDEGNKNETEEIYKNETDEGNKNETEEIYKND. 2 helical membrane passes run 2059–2079 and 2197–2217; these read FLLF…IFFF and IIQC…DFLF. Disordered regions lie at residues 2582-2644 and 2776-2835; these read IYKD…DNNN and GRIW…DKGD. The span at 2592-2629 shows a compositional bias: acidic residues; sequence DNNDDDNINDDDNINDDDNINDDDNNNDDDNNNDDNND. Residues 2779–2821 show a composition bias toward basic and acidic residues; the sequence is WKREENGEKKKNEKNESEKNERNEKNEKNEKHEKHEKHEKNEK. Positions 2785 to 2820 form a coiled coil; sequence GEKKKNEKNESEKNERNEKNEKNEKHEKHEKHEKNE. 2 helical membrane-spanning segments follow: residues 3229 to 3249 and 3296 to 3316; these read LFII…SFIL and LLFF…NINS.

The protein resides in the membrane. This is an uncharacterized protein from Plasmodium falciparum (isolate 3D7).